We begin with the raw amino-acid sequence, 183 residues long: Holliday junction branch migration complex subunit RuvA (183 aa).

The tract at residues M1–L63 is domain I. Positions E64 to N141 are domain II. N141 is a region of interest (flexible linker). The tract at residues N141–S183 is domain III.

The protein belongs to the RuvA family. In terms of assembly, homotetramer. Forms an RuvA(8)-RuvB(12)-Holliday junction (HJ) complex. HJ DNA is sandwiched between 2 RuvA tetramers; dsDNA enters through RuvA and exits via RuvB. An RuvB hexamer assembles on each DNA strand where it exits the tetramer. Each RuvB hexamer is contacted by two RuvA subunits (via domain III) on 2 adjacent RuvB subunits; this complex drives branch migration. In the full resolvosome a probable DNA-RuvA(4)-RuvB(12)-RuvC(2) complex forms which resolves the HJ.

Its subcellular location is the cytoplasm. In terms of biological role, the RuvA-RuvB-RuvC complex processes Holliday junction (HJ) DNA during genetic recombination and DNA repair, while the RuvA-RuvB complex plays an important role in the rescue of blocked DNA replication forks via replication fork reversal (RFR). RuvA specifically binds to HJ cruciform DNA, conferring on it an open structure. The RuvB hexamer acts as an ATP-dependent pump, pulling dsDNA into and through the RuvAB complex. HJ branch migration allows RuvC to scan DNA until it finds its consensus sequence, where it cleaves and resolves the cruciform DNA. This Helicobacter acinonychis (strain Sheeba) protein is Holliday junction branch migration complex subunit RuvA.